A 555-amino-acid chain; its full sequence is Adenine deaminase (555 aa).

The protein belongs to the metallo-dependent hydrolases superfamily. Adenine deaminase family. Mn(2+) is required as a cofactor.

It catalyses the reaction adenine + H2O + H(+) = hypoxanthine + NH4(+). In Methanosarcina mazei (strain ATCC BAA-159 / DSM 3647 / Goe1 / Go1 / JCM 11833 / OCM 88) (Methanosarcina frisia), this protein is Adenine deaminase.